A 220-amino-acid chain; its full sequence is Response regulator protein TmoT (220 aa).

One can recognise a Response regulatory domain in the interval 21–135; sequence VIYIVDDDNA…DLLGAIRTAL (115 aa). Asp-70 is modified (4-aspartylphosphate). An HTH luxR-type domain is found at 151–216; it reads LKASYESLSK…DLVRVTERLK (66 aa). The segment at residues 175-194 is a DNA-binding region (H-T-H motif); that stretch reads NKQTALELDISEATVKVHRH.

Post-translationally, phosphorylated by TmoS.

It localises to the cytoplasm. Functionally, member of the two-component regulatory system TmoS/TmoT involved in the regulation of toluene degradation. Induces expression of tmoX operon. The polypeptide is Response regulator protein TmoT (tmoT) (Ectopseudomonas mendocina (Pseudomonas mendocina)).